Here is a 1491-residue protein sequence, read N- to C-terminus: Copper-transporting ATPase 1 (1491 aa).

Residues Met1 to Ser644 are Cytoplasmic-facing. 2 consecutive HMA domains span residues Asn8–Leu74 and Thr85–Gly151. Residues Thr18, Cys19, and Cys22 each coordinate Cu(+). Thr152 is modified (phosphothreonine). The HMA 3 domain occupies Val171–Phe237. The Cu(+) site is built by Cys182 and Cys185. Ser270 is subject to Phosphoserine. An HMA 4 domain is found at Ser277–Tyr343. Cys288 and Cys291 together coordinate Cu(+). At Thr327 the chain carries Phosphothreonine. Phosphoserine occurs at positions 339, 353, 357, and 362. HMA domains are found at residues Gln377–Ala443, Asn479–Met545, and Gly555–Ser621. The Cu(+) site is built by Cys388, Cys391, Cys490, Cys493, Cys566, and Cys569. The helical transmembrane segment at Phe645–Asp666 threads the bilayer. Over His667–Leu705 the chain is Extracellular. N-linked (GlcNAc...) asparagine glycosylation is present at Asn677. A helical transmembrane segment spans residues Leu706–Gln725. The Cytoplasmic segment spans residues Ala726 to His732. A helical membrane pass occupies residues Lys733–Leu753. Topologically, residues Val754–Phe772 are extracellular. A helical transmembrane segment spans residues Asp773–Lys793. The Cytoplasmic segment spans residues Gly794–Asp926. Residues Lys927 to Ile950 traverse the membrane as a helical segment. The Extracellular portion of the chain corresponds to Gly951–Phe980. The N-linked (GlcNAc...) asparagine glycan is linked to Asn966. Residues Gln981–Ala1002 traverse the membrane as a helical segment. Residues Val1003–Arg1347 are Cytoplasmic-facing. The 4-aspartylphosphate intermediate role is filled by Asp1035. Residue Glu1072 participates in ATP binding. Thr1203 bears the Phosphothreonine mark. Residues Asp1292 and Asp1296 each coordinate Mg(2+). A helical membrane pass occupies residues Ile1348–Ala1365. Over Gly1366–Gln1376 the chain is Extracellular. The helical transmembrane segment at Pro1377–Leu1396 threads the bilayer. Topologically, residues Phe1397–Leu1491 are cytoplasmic. 5 positions are modified to phosphoserine: Ser1421, Ser1423, Ser1451, Ser1454, and Ser1457. The Endocytosis signal signature appears at Leu1458–Leu1459. Phosphoserine occurs at positions 1460, 1464, 1467, and 1477. The segment at Ser1477 to Leu1491 is PDZD11-binding. The Endocytosis signal signature appears at Leu1478–Leu1479.

The protein belongs to the cation transport ATPase (P-type) (TC 3.A.3) family. Type IB subfamily. Monomer. Interacts with PDZD11. Interacts with ATOX1 and COMMD1. Interacts with TYRP1. Directly interacts with SOD3; this interaction is copper-dependent and is required for SOD3 activity. Widely expressed. Highly expressed in pituitary endocrine cells. Expressed in melanocytes (at protein level). Expressed in motor neuron (at protein level). Expressed in hippocampal neuron (at protein level). In the kidney, it is detected in the proximal and distal tubules (at protein level). Expressed in aorta (at protein level).

The protein resides in the golgi apparatus. It is found in the trans-Golgi network membrane. Its subcellular location is the cell membrane. The protein localises to the melanosome membrane. It localises to the early endosome membrane. The protein resides in the cell projection. It is found in the axon. Its subcellular location is the dendrite. The protein localises to the postsynaptic density. The catalysed reaction is Cu(+)(in) + ATP + H2O = Cu(+)(out) + ADP + phosphate + H(+). In terms of biological role, ATP-driven copper (Cu(+)) ion pump that plays an important role in intracellular copper ion homeostasis. Within a catalytic cycle, acquires Cu(+) ion from donor protein on the cytoplasmic side of the membrane and delivers it to acceptor protein on the lumenal side. The transfer of Cu(+) ion across the membrane is coupled to ATP hydrolysis and is associated with a transient phosphorylation that shifts the pump conformation from inward-facing to outward-facing state. Under physiological conditions, at low cytosolic copper concentration, it is localized at the trans-Golgi network (TGN) where it transfers Cu(+) ions to cuproenzymes of the secretory pathway. Upon elevated cytosolic copper concentrations, it relocalizes to the plasma membrane where it is responsible for the export of excess Cu(+) ions. May play a dual role in neuron function and survival by regulating cooper efflux and neuronal transmission at the synapse as well as by supplying Cu(+) ions to enzymes such as PAM, TYR and SOD3. In the melanosomes of pigmented cells, provides copper cofactor to TYR to form an active TYR holoenzyme for melanin biosynthesis. In Mus musculus (Mouse), this protein is Copper-transporting ATPase 1.